The following is a 160-amino-acid chain: MPKVIYPGTFDPITNGHTDLIERAGRMFDEIVVAVAYNPKKQPLLNLEERCELVRKATAHLPNVSVTGFSNLLADFVREQNASVILRGLRAVSDFEYEFQLADMNRRLAPEVESVFLTPANHLSYISSTLIREIASLGGDISEFVDPAVTEALQQKFSES.

Thr9 provides a ligand contact to substrate. Residues 9–10 (TF) and His17 contribute to the ATP site. Lys41, Leu73, and Arg87 together coordinate substrate. Residues 88–90 (GLR), Glu98, and 123–129 (LSYISST) each bind ATP.

This sequence belongs to the bacterial CoaD family. In terms of assembly, homohexamer. Mg(2+) serves as cofactor.

The protein localises to the cytoplasm. The enzyme catalyses (R)-4'-phosphopantetheine + ATP + H(+) = 3'-dephospho-CoA + diphosphate. It functions in the pathway cofactor biosynthesis; coenzyme A biosynthesis; CoA from (R)-pantothenate: step 4/5. Reversibly transfers an adenylyl group from ATP to 4'-phosphopantetheine, yielding dephospho-CoA (dPCoA) and pyrophosphate. The chain is Phosphopantetheine adenylyltransferase from Marinobacter nauticus (strain ATCC 700491 / DSM 11845 / VT8) (Marinobacter aquaeolei).